The sequence spans 94 residues: Antifungal protein (94 aa).

The N-terminal stretch at 1–21 (MKFVSLASLGFALVAALGAVA) is a signal peptide. A propeptide spanning residues 22–43 (TPVEADSLTAGGLDARDESAVL) is cleaved from the precursor. Disulfide bonds link Cys-50–Cys-76, Cys-57–Cys-83, Cys-69–Cys-71, and Cys-92–Cys-94.

Belongs to the antifungal protein pafB family.

Its subcellular location is the secreted. It localises to the host cytoplasm. Its function is as follows. Antifungal protein that acts as an inhibitor of growth of a variety of fungal species. This chain is Antifungal protein (afp), found in Aspergillus giganteus.